We begin with the raw amino-acid sequence, 415 residues long: Serine hydroxymethyltransferase (415 aa).

Residues Leu117 and 121-123 contribute to the (6S)-5,6,7,8-tetrahydrofolate site; that span reads GHL. Lys226 is modified (N6-(pyridoxal phosphate)lysine). (6S)-5,6,7,8-tetrahydrofolate is bound by residues Glu241 and 349–351; that span reads SPF.

It belongs to the SHMT family. In terms of assembly, homodimer. Pyridoxal 5'-phosphate serves as cofactor.

It localises to the cytoplasm. It catalyses the reaction (6R)-5,10-methylene-5,6,7,8-tetrahydrofolate + glycine + H2O = (6S)-5,6,7,8-tetrahydrofolate + L-serine. It participates in one-carbon metabolism; tetrahydrofolate interconversion. The protein operates within amino-acid biosynthesis; glycine biosynthesis; glycine from L-serine: step 1/1. In terms of biological role, catalyzes the reversible interconversion of serine and glycine with tetrahydrofolate (THF) serving as the one-carbon carrier. This reaction serves as the major source of one-carbon groups required for the biosynthesis of purines, thymidylate, methionine, and other important biomolecules. Also exhibits THF-independent aldolase activity toward beta-hydroxyamino acids, producing glycine and aldehydes, via a retro-aldol mechanism. This chain is Serine hydroxymethyltransferase, found in Trichlorobacter lovleyi (strain ATCC BAA-1151 / DSM 17278 / SZ) (Geobacter lovleyi).